The chain runs to 253 residues: Aspartate/glutamate leucyltransferase (253 aa).

It belongs to the R-transferase family. Bpt subfamily.

Its subcellular location is the cytoplasm. The catalysed reaction is N-terminal L-glutamyl-[protein] + L-leucyl-tRNA(Leu) = N-terminal L-leucyl-L-glutamyl-[protein] + tRNA(Leu) + H(+). The enzyme catalyses N-terminal L-aspartyl-[protein] + L-leucyl-tRNA(Leu) = N-terminal L-leucyl-L-aspartyl-[protein] + tRNA(Leu) + H(+). Its function is as follows. Functions in the N-end rule pathway of protein degradation where it conjugates Leu from its aminoacyl-tRNA to the N-termini of proteins containing an N-terminal aspartate or glutamate. This chain is Aspartate/glutamate leucyltransferase, found in Allorhizobium ampelinum (strain ATCC BAA-846 / DSM 112012 / S4) (Agrobacterium vitis (strain S4)).